The primary structure comprises 535 residues: Endogenous retrovirus group V member 2 Env polyprotein (535 aa).

The N-terminal stretch at 1–21 is a signal peptide; sequence MTEKFLFLYLSLLPMPLLSQA. Topologically, residues 22–321 are extracellular; it reads QWNENSLVSF…NTTQPRQKRA (300 aa). An N-linked (GlcNAc...) asparagine glycan is attached at asparagine 68. The helical transmembrane segment at 322–342 threads the bilayer; that stretch reads LGLILAGMGAAIGMIAPWGGF. The Cytoplasmic segment spans residues 343-456; the sequence is TYHDVTLRNL…VKSALPSLNW (114 aa). Residues 457 to 477 form a helical membrane-spanning segment; that stretch reads FVPLLGPATVILLLFLFGPCF. The Extracellular portion of the chain corresponds to 478–535; the sequence is FNLLIKCVSSRIKQFHMKSPQMERYQLSVIGGPSTYKHISPLDASGQRFRETMEEFSL.

It belongs to the gamma type-C retroviral envelope protein family. Expressed in placenta.

The protein localises to the membrane. This chain is Endogenous retrovirus group V member 2 Env polyprotein (ERVV-2), found in Homo sapiens (Human).